Here is a 656-residue protein sequence, read N- to C-terminus: uncharacterized protein (656 aa).

This is an uncharacterized protein from Rickettsia prowazekii (strain Madrid E).